A 421-amino-acid polypeptide reads, in one-letter code: Signal recognition particle receptor FtsY (421 aa).

GTP is bound by residues 228–235 (GINGAGKT), 309–313 (DTAGR), and 373–376 (TKLD).

This sequence belongs to the GTP-binding SRP family. FtsY subfamily. In terms of assembly, part of the signal recognition particle protein translocation system, which is composed of SRP and FtsY. SRP is a ribonucleoprotein composed of Ffh and a 4.5S RNA molecule.

It localises to the cell inner membrane. It is found in the cytoplasm. The catalysed reaction is GTP + H2O = GDP + phosphate + H(+). Involved in targeting and insertion of nascent membrane proteins into the cytoplasmic membrane. Acts as a receptor for the complex formed by the signal recognition particle (SRP) and the ribosome-nascent chain (RNC). Interaction with SRP-RNC leads to the transfer of the RNC complex to the Sec translocase for insertion into the membrane, the hydrolysis of GTP by both Ffh and FtsY, and the dissociation of the SRP-FtsY complex into the individual components. This Neisseria meningitidis serogroup B (strain ATCC BAA-335 / MC58) protein is Signal recognition particle receptor FtsY.